The chain runs to 207 residues: Large ribosomal subunit protein uL4 (207 aa).

Positions 44-78 (MRQGTHKTKNRAEVSGGGRKPWRQKGTGRARQGSI) are disordered.

It belongs to the universal ribosomal protein uL4 family. Part of the 50S ribosomal subunit.

One of the primary rRNA binding proteins, this protein initially binds near the 5'-end of the 23S rRNA. It is important during the early stages of 50S assembly. It makes multiple contacts with different domains of the 23S rRNA in the assembled 50S subunit and ribosome. In terms of biological role, forms part of the polypeptide exit tunnel. This is Large ribosomal subunit protein uL4 from Geobacillus kaustophilus (strain HTA426).